Reading from the N-terminus, the 631-residue chain is Methanol dehydrogenase [cytochrome c] subunit 1 (631 aa).

Residues 1–32 (MNRNTPKARGASSLAMAVAMGLAVLTTAPATA) form the signal peptide. Cys-135 and Cys-136 are disulfide-bonded. Glu-209 and Asn-293 together coordinate Ca(2+). The active-site Proton acceptor is Asp-335. An intrachain disulfide couples Cys-418 to Cys-447.

Belongs to the bacterial PQQ dehydrogenase family. As to quaternary structure, heterotetramer composed of 2 alpha and 2 beta subunits. Pyrroloquinoline quinone serves as cofactor. The cofactor is Ca(2+).

The protein resides in the periplasm. It carries out the reaction 2 Fe(III)-[cytochrome cL] + a primary alcohol = 2 Fe(II)-[cytochrome cL] + an aldehyde + 2 H(+). Catalyzes the oxidation of primary alcohols including methanol. This Paracoccus denitrificans protein is Methanol dehydrogenase [cytochrome c] subunit 1 (moxF).